A 357-amino-acid chain; its full sequence is Homoserine O-acetyltransferase (357 aa).

In terms of domain architecture, AB hydrolase-1 spans 51-340; sequence NVIVICHALT…EPYGHDAFLI (290 aa). Residue serine 147 is the Nucleophile of the active site. Arginine 216 lines the substrate pocket. Catalysis depends on residues aspartate 306 and histidine 335. Position 336 (aspartate 336) interacts with substrate.

The protein belongs to the AB hydrolase superfamily. MetX family. In terms of assembly, homodimer.

The protein localises to the cytoplasm. The enzyme catalyses L-homoserine + acetyl-CoA = O-acetyl-L-homoserine + CoA. It functions in the pathway amino-acid biosynthesis; L-methionine biosynthesis via de novo pathway; O-acetyl-L-homoserine from L-homoserine: step 1/1. In terms of biological role, transfers an acetyl group from acetyl-CoA to L-homoserine, forming acetyl-L-homoserine. The sequence is that of Homoserine O-acetyltransferase from Chlorobium chlorochromatii (strain CaD3).